The sequence spans 271 residues: Ribosomal RNA small subunit methyltransferase A (271 aa).

Positions 11, 13, 38, 58, 86, and 101 each coordinate S-adenosyl-L-methionine.

The protein belongs to the class I-like SAM-binding methyltransferase superfamily. rRNA adenine N(6)-methyltransferase family. RsmA subfamily.

The protein localises to the cytoplasm. It carries out the reaction adenosine(1518)/adenosine(1519) in 16S rRNA + 4 S-adenosyl-L-methionine = N(6)-dimethyladenosine(1518)/N(6)-dimethyladenosine(1519) in 16S rRNA + 4 S-adenosyl-L-homocysteine + 4 H(+). In terms of biological role, specifically dimethylates two adjacent adenosines (A1518 and A1519) in the loop of a conserved hairpin near the 3'-end of 16S rRNA in the 30S particle. May play a critical role in biogenesis of 30S subunits. This chain is Ribosomal RNA small subunit methyltransferase A, found in Helicobacter acinonychis (strain Sheeba).